Here is a 72-residue protein sequence, read N- to C-terminus: ATP synthase subunit c (72 aa).

2 helical membrane-spanning segments follow: residues 5–25 (LLAAGIAVLAGIGAGIGIGIA) and 52–72 (GLSEATAIYGLVISIILLFVV).

Belongs to the ATPase C chain family. As to quaternary structure, F-type ATPases have 2 components, F(1) - the catalytic core - and F(0) - the membrane proton channel. F(1) has five subunits: alpha(3), beta(3), gamma(1), delta(1), epsilon(1). F(0) has three main subunits: a(1), b(2) and c(10-14). The alpha and beta chains form an alternating ring which encloses part of the gamma chain. F(1) is attached to F(0) by a central stalk formed by the gamma and epsilon chains, while a peripheral stalk is formed by the delta and b chains.

It localises to the cell membrane. F(1)F(0) ATP synthase produces ATP from ADP in the presence of a proton or sodium gradient. F-type ATPases consist of two structural domains, F(1) containing the extramembraneous catalytic core and F(0) containing the membrane proton channel, linked together by a central stalk and a peripheral stalk. During catalysis, ATP synthesis in the catalytic domain of F(1) is coupled via a rotary mechanism of the central stalk subunits to proton translocation. Its function is as follows. Key component of the F(0) channel; it plays a direct role in translocation across the membrane. A homomeric c-ring of between 10-14 subunits forms the central stalk rotor element with the F(1) delta and epsilon subunits. The protein is ATP synthase subunit c of Clostridium perfringens (strain SM101 / Type A).